Reading from the N-terminus, the 46-residue chain is uncharacterized protein (46 aa).

A helical membrane pass occupies residues 12–34; sequence HFNHFVIALSFIYGLTELGYLLL.

It localises to the cell membrane. This is an uncharacterized protein from Bacillus subtilis (strain 168).